A 365-amino-acid chain; its full sequence is 3-amino-4-hydroxybenzoate 4-O-methyltransferase (365 aa).

The span at Met1–Thr18 shows a compositional bias: polar residues. The disordered stretch occupies residues Met1–Asp32. Residues Asp227, Gly253–Phe255, and Arg270 contribute to the S-adenosyl-L-methionine site. The active-site Proton acceptor is the His273.

The protein belongs to the class I-like SAM-binding methyltransferase superfamily. Cation-independent O-methyltransferase family.

The enzyme catalyses 3-amino-2,4-dihydroxybenzoate + S-adenosyl-L-methionine = 3-amino-2-hydroxy-4-methoxybenzoate + S-adenosyl-L-homocysteine + H(+). It participates in antibiotic biosynthesis. Its function is as follows. Part of a gene cluster involved in the biosynthesis of cremeomycin, a light-sensitive o-diazoquinone with antibacterial and antiproliferative effects. Catalyzes the methylation of the C4 hydroxyl group of 3-amino-2,4-dihydroxybenzoate (3,2,4-ADHBA) to form 3-amino-2-hydroxy-4-methoxybenzoate (3,2,4-AHMBA). In vitro, can also catalyze the methylation of 3-amino-4-hydroxybenzoate (3,4-AHBA). In Streptomyces cremeus, this protein is 3-amino-4-hydroxybenzoate 4-O-methyltransferase.